Reading from the N-terminus, the 61-residue chain is Ferredoxin-3 (61 aa).

4Fe-4S ferredoxin-type domains are found at residues 2–31 and 32–61; these read YKITIDTDKCTGDGECVDVCPVEVYELQDG and KAVAVNEDECLGCESCVEVCEQDALTVEEN. [3Fe-4S] cluster contacts are provided by C11 and C17. The [4Fe-4S] cluster site is built by C21, C41, C44, and C47. A [3Fe-4S] cluster-binding site is contributed by C51.

The cofactor is [3Fe-4S] cluster. Requires [4Fe-4S] cluster as cofactor.

Its function is as follows. Ferredoxins are iron-sulfur proteins that transfer electrons in a wide variety of metabolic reactions. The protein is Ferredoxin-3 of Desulfocurvibacter africanus (Desulfovibrio africanus).